Consider the following 218-residue polypeptide: Octanoyltransferase (218 aa).

Positions 32-218 (GEAAEAIWLL…LRTFPQHFPD (187 aa)) constitute a BPL/LPL catalytic domain. Substrate contacts are provided by residues 71–78 (RGGQYTYH), 151–153 (AIG), and 164–166 (GLS). The active-site Acyl-thioester intermediate is cysteine 182.

This sequence belongs to the LipB family.

It localises to the cytoplasm. The catalysed reaction is octanoyl-[ACP] + L-lysyl-[protein] = N(6)-octanoyl-L-lysyl-[protein] + holo-[ACP] + H(+). It functions in the pathway protein modification; protein lipoylation via endogenous pathway; protein N(6)-(lipoyl)lysine from octanoyl-[acyl-carrier-protein]: step 1/2. In terms of biological role, catalyzes the transfer of endogenously produced octanoic acid from octanoyl-acyl-carrier-protein onto the lipoyl domains of lipoate-dependent enzymes. Lipoyl-ACP can also act as a substrate although octanoyl-ACP is likely to be the physiological substrate. This is Octanoyltransferase from Cereibacter sphaeroides (strain ATCC 17023 / DSM 158 / JCM 6121 / CCUG 31486 / LMG 2827 / NBRC 12203 / NCIMB 8253 / ATH 2.4.1.) (Rhodobacter sphaeroides).